Reading from the N-terminus, the 230-residue chain is Transcriptional regulatory protein CitT (230 aa).

Residues 6 to 124 (KVLIIEDDFR…VLHQRLDAYV (119 aa)) form the Response regulatory domain. 4-aspartylphosphate is present on D59. A DNA-binding region (H-T-H motif) is located at residues 184 to 203 (AMEGARLIGASRSTVRRYFE).

In terms of processing, phosphorylated by CitS.

It is found in the cytoplasm. Its function is as follows. Member of the two-component regulatory system CitT/CitS. The polypeptide is Transcriptional regulatory protein CitT (citT) (Halalkalibacterium halodurans (strain ATCC BAA-125 / DSM 18197 / FERM 7344 / JCM 9153 / C-125) (Bacillus halodurans)).